Reading from the N-terminus, the 215-residue chain is ATP-dependent Clp protease proteolytic subunit (215 aa).

Serine 116 functions as the Nucleophile in the catalytic mechanism. Residue histidine 141 is part of the active site.

Belongs to the peptidase S14 family. In terms of assembly, fourteen ClpP subunits assemble into 2 heptameric rings which stack back to back to give a disk-like structure with a central cavity, resembling the structure of eukaryotic proteasomes.

It is found in the cytoplasm. The enzyme catalyses Hydrolysis of proteins to small peptides in the presence of ATP and magnesium. alpha-casein is the usual test substrate. In the absence of ATP, only oligopeptides shorter than five residues are hydrolyzed (such as succinyl-Leu-Tyr-|-NHMec, and Leu-Tyr-Leu-|-Tyr-Trp, in which cleavage of the -Tyr-|-Leu- and -Tyr-|-Trp bonds also occurs).. In terms of biological role, cleaves peptides in various proteins in a process that requires ATP hydrolysis. Has a chymotrypsin-like activity. Plays a major role in the degradation of misfolded proteins. In Psychrobacter cryohalolentis (strain ATCC BAA-1226 / DSM 17306 / VKM B-2378 / K5), this protein is ATP-dependent Clp protease proteolytic subunit.